The sequence spans 334 residues: MKNRVISLLMASLLLVLSVIVAPFYKAEAATVVNTPFVAVFSNFDSSQWEKADWANGSVFNCVWKPSQVTFSNGKMILTLDREYGGSYPYKSGEYRTKSFFGYGYYEVRMKAAKNVGIVSSFFTYTGPSDNNPWDEIDIEFLGKDTTKVQFNWYKNGVGGNEYLHNLGFDASQDFHTYGFEWRPDYIDFYVDGKKVYRGTRNIPVTPGKIMMNLWPGIGVDEWLGRYDGRTPLQAEYEYVKYYPNGVPQDNPTPTPTIAPSTPTNPNLPLKGDVNGDGHVNSSDYSLFKRYLLRVIDRFPVGDQSVADVNRDGRIDSTDLTMLKRYLIRAIPSL.

An N-terminal signal peptide occupies residues 1–27 (MKNRVISLLMASLLLVLSVIVAPFYKA). One can recognise a GH16 domain in the interval 28-248 (EAATVVNTPF…YVKYYPNGVP (221 aa)). The active-site Nucleophile is the glutamate 136. Residue glutamate 140 is the Proton donor of the active site. Positions 267-334 (NLPLKGDVNG…RYLIRAIPSL (68 aa)) constitute a Dockerin domain.

The protein belongs to the glycosyl hydrolase 16 family. In terms of assembly, may form part of a multienzyme complex (cellulosome).

It catalyses the reaction Hydrolysis of (1-&gt;4)-beta-D-glucosidic linkages in beta-D-glucans containing (1-&gt;3)- and (1-&gt;4)-bonds.. The protein is Beta-glucanase (licB) of Acetivibrio thermocellus (strain ATCC 27405 / DSM 1237 / JCM 9322 / NBRC 103400 / NCIMB 10682 / NRRL B-4536 / VPI 7372) (Clostridium thermocellum).